The sequence spans 416 residues: Argininosuccinate synthase (416 aa).

ATP is bound by residues 19–27 (AYSGGLDTS) and A46. Residues Y97 and S102 each contribute to the L-citrulline site. G127 contacts ATP. 3 residues coordinate L-aspartate: T129, N133, and D134. N133 lines the L-citrulline pocket. Residues R137, S188, S197, E273, and Y285 each contribute to the L-citrulline site.

The protein belongs to the argininosuccinate synthase family. Type 1 subfamily. In terms of assembly, homotetramer.

The protein resides in the cytoplasm. The enzyme catalyses L-citrulline + L-aspartate + ATP = 2-(N(omega)-L-arginino)succinate + AMP + diphosphate + H(+). It participates in amino-acid biosynthesis; L-arginine biosynthesis; L-arginine from L-ornithine and carbamoyl phosphate: step 2/3. This is Argininosuccinate synthase from Granulibacter bethesdensis (strain ATCC BAA-1260 / CGDNIH1).